A 544-amino-acid polypeptide reads, in one-letter code: CTP synthase (544 aa).

The tract at residues 1–265 (MTKFIFVTGG…DNIITEQLQL (265 aa)) is amidoligase domain. Position 13 (serine 13) interacts with CTP. Serine 13 is a binding site for UTP. ATP contacts are provided by residues 14–19 (SLGKGI) and aspartate 71. 2 residues coordinate Mg(2+): aspartate 71 and glutamate 139. CTP is bound by residues 146 to 148 (DIE), 186 to 191 (KTKPTQ), and lysine 222. UTP contacts are provided by residues 186-191 (KTKPTQ) and lysine 222. Positions 290-544 (KIAMVGKYVD…VKAALNNKKA (255 aa)) constitute a Glutamine amidotransferase type-1 domain. Glycine 353 is an L-glutamine binding site. The active-site Nucleophile; for glutamine hydrolysis is the cysteine 380. L-glutamine is bound by residues 381–384 (LGMQ), glutamate 404, and arginine 471. Catalysis depends on residues histidine 517 and glutamate 519.

This sequence belongs to the CTP synthase family. In terms of assembly, homotetramer.

The catalysed reaction is UTP + L-glutamine + ATP + H2O = CTP + L-glutamate + ADP + phosphate + 2 H(+). It catalyses the reaction L-glutamine + H2O = L-glutamate + NH4(+). It carries out the reaction UTP + NH4(+) + ATP = CTP + ADP + phosphate + 2 H(+). It functions in the pathway pyrimidine metabolism; CTP biosynthesis via de novo pathway; CTP from UDP: step 2/2. With respect to regulation, allosterically activated by GTP, when glutamine is the substrate; GTP has no effect on the reaction when ammonia is the substrate. The allosteric effector GTP functions by stabilizing the protein conformation that binds the tetrahedral intermediate(s) formed during glutamine hydrolysis. Inhibited by the product CTP, via allosteric rather than competitive inhibition. In terms of biological role, catalyzes the ATP-dependent amination of UTP to CTP with either L-glutamine or ammonia as the source of nitrogen. Regulates intracellular CTP levels through interactions with the four ribonucleotide triphosphates. The sequence is that of CTP synthase from Neisseria gonorrhoeae (strain ATCC 700825 / FA 1090).